The chain runs to 275 residues: NH(3)-dependent NAD(+) synthetase (275 aa).

G47–S54 serves as a coordination point for ATP. A Mg(2+)-binding site is contributed by D53. Residue R141 participates in deamido-NAD(+) binding. T161 lines the ATP pocket. Residue E166 participates in Mg(2+) binding. The deamido-NAD(+) site is built by K174 and D181. 2 residues coordinate ATP: K190 and T212. H261 to K262 lines the deamido-NAD(+) pocket.

This sequence belongs to the NAD synthetase family. As to quaternary structure, homodimer.

The enzyme catalyses deamido-NAD(+) + NH4(+) + ATP = AMP + diphosphate + NAD(+) + H(+). The protein operates within cofactor biosynthesis; NAD(+) biosynthesis; NAD(+) from deamido-NAD(+) (ammonia route): step 1/1. Functionally, catalyzes the ATP-dependent amidation of deamido-NAD to form NAD. Uses ammonia as a nitrogen source. This is NH(3)-dependent NAD(+) synthetase from Oceanobacillus iheyensis (strain DSM 14371 / CIP 107618 / JCM 11309 / KCTC 3954 / HTE831).